The chain runs to 135 residues: NADPH-dependent 7-cyano-7-deazaguanine reductase (135 aa).

Cys48 functions as the Thioimide intermediate in the catalytic mechanism. Asp55 functions as the Proton donor in the catalytic mechanism. Substrate contacts are provided by residues 70 to 72 and 89 to 90; these read LEL and HE.

This sequence belongs to the GTP cyclohydrolase I family. QueF type 1 subfamily.

It is found in the cytoplasm. It carries out the reaction 7-aminomethyl-7-carbaguanine + 2 NADP(+) = 7-cyano-7-deazaguanine + 2 NADPH + 3 H(+). Its pathway is tRNA modification; tRNA-queuosine biosynthesis. In terms of biological role, catalyzes the NADPH-dependent reduction of 7-cyano-7-deazaguanine (preQ0) to 7-aminomethyl-7-deazaguanine (preQ1). This is NADPH-dependent 7-cyano-7-deazaguanine reductase from Prochlorococcus marinus (strain SARG / CCMP1375 / SS120).